A 224-amino-acid polypeptide reads, in one-letter code: Glutathione S-transferase Mu 5 (224 aa).

The 88-residue stretch at 4-91 (KSMVLGYWDI…YIARKHNMCG (88 aa)) folds into the GST N-terminal domain. At Ser-5 the chain carries Phosphoserine. Glutathione-binding positions include 10 to 11 (YW), 49 to 53 (WLDVK), 62 to 63 (NL), and 75 to 76 (QS). The GST C-terminal domain occupies 93 to 211 (TEEEKIRVDI…QSDRFFKMPI (119 aa)). Tyr-119 serves as a coordination point for substrate.

The protein belongs to the GST superfamily. Mu family. Homodimer. Interacts with PFKM isoform 2 and isoform 3 (via N-terminal testis-specific region).

It is found in the cytoplasm. The catalysed reaction is RX + glutathione = an S-substituted glutathione + a halide anion + H(+). Its function is as follows. Conjugation of reduced glutathione to a wide number of exogenous and endogenous hydrophobic electrophiles. This is Glutathione S-transferase Mu 5 (Gstm5) from Mus musculus (Mouse).